The primary structure comprises 387 residues: Cyclin-J-like protein (387 aa).

The region spanning 13 to 142 (DVHCTLREKE…LLEAFSWDLC (130 aa)) is the Cyclin N-terminal domain.

The protein belongs to the cyclin family. Cyclin J subfamily.

The sequence is that of Cyclin-J-like protein (Ccnjl) from Mus musculus (Mouse).